A 184-amino-acid polypeptide reads, in one-letter code: mRNA transport regulator MTR2 (184 aa).

Residues K111–N135 form a disordered region. The segment covering I120–N129 has biased composition (polar residues). Phosphothreonine is present on T125.

As to quaternary structure, interacts with MEX67.

It localises to the nucleus. Its function is as follows. Affects mRNA transport from the nucleus to the cytoplasm. This Saccharomyces cerevisiae (strain ATCC 204508 / S288c) (Baker's yeast) protein is mRNA transport regulator MTR2 (MTR2).